The following is a 263-amino-acid chain: Pyruvate formate-lyase-activating enzyme (263 aa).

In terms of domain architecture, Radical SAM core spans Val23 to Arg260. Positions 37, 41, and 44 each coordinate [4Fe-4S] cluster. S-adenosyl-L-methionine-binding positions include Tyr43–His45, Gly87, Asp142–Lys144, and His215.

Belongs to the organic radical-activating enzymes family. It depends on [4Fe-4S] cluster as a cofactor.

It is found in the cytoplasm. The catalysed reaction is glycyl-[formate C-acetyltransferase] + reduced [flavodoxin] + S-adenosyl-L-methionine = glycin-2-yl radical-[formate C-acetyltransferase] + semiquinone [flavodoxin] + 5'-deoxyadenosine + L-methionine + H(+). Activation of pyruvate formate-lyase under anaerobic conditions by generation of an organic free radical, using S-adenosylmethionine and reduced flavodoxin as cosubstrates to produce 5'-deoxy-adenosine. The chain is Pyruvate formate-lyase-activating enzyme (act) from Streptococcus mutans serotype c (strain ATCC 700610 / UA159).